Here is a 445-residue protein sequence, read N- to C-terminus: MQENYKAKAYDILKNLNIEEGDLIEIKKGDLRIRGVLLPSYSKDERIFVIKLDNGYNIGISIDNISEIKLITKNSSKAQESERKEVSRNGAKSEIKIISTGGTIVSKVEYETGAVRPALTTEEIVQFLPEINEIAKVDAEVLFSILSENMKPEYWVKIAESVKKAFDEGNTGVVIAHGTDTMAYTASALAFSLRSLQGPVVLVGSQRSSDRPSSDSAINLLSAVTTAKYAPFGEVVVNMHADSSDTYALVHRGVKVRKMHSSRRDAFQSVNDKPLAKVLWKERKLVMLDKSYMSKKGETTLDAKFDNRAFLLYYYPGLDRDFLEHILTNTKIRGLIIAGTGLGHTSSDYVELFRKATKDGIFIGMTTQCLFGRVNMNVYTTGRQLLDAGVTPLEDMLPEVALVKLMWVLAHEQDLEKIRSLMISNLVGEINPRHTLDLFPRWSYE.

The region spanning 93 to 425 (SEIKIISTGG…EKIRSLMISN (333 aa)) is the Asparaginase/glutaminase domain. Catalysis depends on residues T103, T179, D180, and K258.

Belongs to the asparaginase 1 family. GatD subfamily. In terms of assembly, heterodimer of GatD and GatE.

The catalysed reaction is L-glutamyl-tRNA(Gln) + L-glutamine + ATP + H2O = L-glutaminyl-tRNA(Gln) + L-glutamate + ADP + phosphate + H(+). Functionally, allows the formation of correctly charged Gln-tRNA(Gln) through the transamidation of misacylated Glu-tRNA(Gln) in organisms which lack glutaminyl-tRNA synthetase. The reaction takes place in the presence of glutamine and ATP through an activated gamma-phospho-Glu-tRNA(Gln). The GatDE system is specific for glutamate and does not act on aspartate. In Saccharolobus islandicus (strain M.16.27) (Sulfolobus islandicus), this protein is Glutamyl-tRNA(Gln) amidotransferase subunit D.